Reading from the N-terminus, the 360-residue chain is Peptide chain release factor 1 (360 aa).

Glutamine 235 carries the N5-methylglutamine modification.

The protein belongs to the prokaryotic/mitochondrial release factor family. In terms of processing, methylated by PrmC. Methylation increases the termination efficiency of RF1.

It is found in the cytoplasm. Functionally, peptide chain release factor 1 directs the termination of translation in response to the peptide chain termination codons UAG and UAA. The protein is Peptide chain release factor 1 of Paracidovorax citrulli (strain AAC00-1) (Acidovorax citrulli).